We begin with the raw amino-acid sequence, 165 residues long: Xanthine-guanine phosphoribosyltransferase (165 aa).

5-phospho-alpha-D-ribose 1-diphosphate contacts are provided by residues 41–42 (RG) and 98–106 (DDLTDTGKT). Position 99 (D99) interacts with Mg(2+). D102 and I145 together coordinate guanine. Xanthine contacts are provided by D102 and I145. GMP is bound by residues 102 to 106 (DTGKT) and 144 to 145 (WI).

This sequence belongs to the purine/pyrimidine phosphoribosyltransferase family. XGPT subfamily. Homotetramer. It depends on Mg(2+) as a cofactor.

Its subcellular location is the cell inner membrane. The catalysed reaction is GMP + diphosphate = guanine + 5-phospho-alpha-D-ribose 1-diphosphate. It carries out the reaction XMP + diphosphate = xanthine + 5-phospho-alpha-D-ribose 1-diphosphate. It catalyses the reaction IMP + diphosphate = hypoxanthine + 5-phospho-alpha-D-ribose 1-diphosphate. It participates in purine metabolism; GMP biosynthesis via salvage pathway; GMP from guanine: step 1/1. The protein operates within purine metabolism; XMP biosynthesis via salvage pathway; XMP from xanthine: step 1/1. Its function is as follows. Purine salvage pathway enzyme that catalyzes the transfer of the ribosyl-5-phosphate group from 5-phospho-alpha-D-ribose 1-diphosphate (PRPP) to the N9 position of the 6-oxopurines guanine and xanthine to form the corresponding ribonucleotides GMP (guanosine 5'-monophosphate) and XMP (xanthosine 5'-monophosphate), with the release of PPi. To a lesser extent, also acts on hypoxanthine. This chain is Xanthine-guanine phosphoribosyltransferase, found in Rhizobium meliloti (strain 1021) (Ensifer meliloti).